A 414-amino-acid chain; its full sequence is 2,3-diketo-5-methylthiopentyl-1-phosphate enolase (414 aa).

K99 (proton acceptor) is an active-site residue. Residues K148, 174–177, H265, G338, and 360–361 contribute to the substrate site; these read KDDE and GG. Residues K174, D176, and E177 each contribute to the Mg(2+) site. K174 bears the N6-carboxylysine mark.

This sequence belongs to the RuBisCO large chain family. Type IV subfamily. As to quaternary structure, homodimer. Mg(2+) is required as a cofactor.

It catalyses the reaction 5-methylsulfanyl-2,3-dioxopentyl phosphate = 2-hydroxy-5-methylsulfanyl-3-oxopent-1-enyl phosphate. Its pathway is amino-acid biosynthesis; L-methionine biosynthesis via salvage pathway; L-methionine from S-methyl-5-thio-alpha-D-ribose 1-phosphate: step 3/6. Its function is as follows. Catalyzes the enolization of 2,3-diketo-5-methylthiopentyl-1-phosphate (DK-MTP-1-P) into 2-hydroxy-3-keto-5-methylthiopentenyl-1-phosphate (HK-MTPenyl-1-P). In Bacillus cereus (strain ZK / E33L), this protein is 2,3-diketo-5-methylthiopentyl-1-phosphate enolase.